The primary structure comprises 212 residues: Orotate phosphoribosyltransferase (212 aa).

Lysine 26 lines the 5-phospho-alpha-D-ribose 1-diphosphate pocket. An orotate-binding site is contributed by 34 to 35; sequence FF. 5-phospho-alpha-D-ribose 1-diphosphate-binding positions include 72 to 73, arginine 98, lysine 99, lysine 102, histidine 104, and 123 to 131; these read YK and DDVISAGTS. 2 residues coordinate orotate: serine 127 and arginine 155.

Belongs to the purine/pyrimidine phosphoribosyltransferase family. PyrE subfamily. Homodimer. Requires Mg(2+) as cofactor.

The catalysed reaction is orotidine 5'-phosphate + diphosphate = orotate + 5-phospho-alpha-D-ribose 1-diphosphate. Its pathway is pyrimidine metabolism; UMP biosynthesis via de novo pathway; UMP from orotate: step 1/2. Functionally, catalyzes the transfer of a ribosyl phosphate group from 5-phosphoribose 1-diphosphate to orotate, leading to the formation of orotidine monophosphate (OMP). This Thiobacillus denitrificans (strain ATCC 25259 / T1) protein is Orotate phosphoribosyltransferase.